Reading from the N-terminus, the 96-residue chain is Putative septation protein SpoVG (96 aa).

It belongs to the SpoVG family.

In terms of biological role, could be involved in septation. The chain is Putative septation protein SpoVG from Clostridium kluyveri (strain ATCC 8527 / DSM 555 / NBRC 12016 / NCIMB 10680 / K1).